Consider the following 268-residue polypeptide: Probable 1-acyl-sn-glycerol-3-phosphate acyltransferase (268 aa).

The short motif at 92 to 97 (HKSNLD) is the HXXXXD motif element.

Belongs to the 1-acyl-sn-glycerol-3-phosphate acyltransferase family.

It catalyses the reaction a 1-acyl-sn-glycero-3-phosphate + an acyl-CoA = a 1,2-diacyl-sn-glycero-3-phosphate + CoA. It participates in phospholipid metabolism; CDP-diacylglycerol biosynthesis; CDP-diacylglycerol from sn-glycerol 3-phosphate: step 2/3. Functionally, converts lysophosphatidic acid (LPA) into phosphatidic acid by incorporating acyl moiety at the 2 position. The polypeptide is Probable 1-acyl-sn-glycerol-3-phosphate acyltransferase (plsC) (Mycoplasma genitalium (strain ATCC 33530 / DSM 19775 / NCTC 10195 / G37) (Mycoplasmoides genitalium)).